The primary structure comprises 156 residues: Small ribosomal subunit protein uS7c (156 aa).

Belongs to the universal ribosomal protein uS7 family. Part of the 30S ribosomal subunit.

It is found in the plastid. Its subcellular location is the chloroplast. Its function is as follows. One of the primary rRNA binding proteins, it binds directly to 16S rRNA where it nucleates assembly of the head domain of the 30S subunit. The protein is Small ribosomal subunit protein uS7c (rps7) of Thalassiosira pseudonana (Marine diatom).